Consider the following 213-residue polypeptide: Small ribosomal subunit protein uS3 (213 aa).

The KH type-2 domain maps to 38–106 (IRAFVKKLLY…EFSLEVNEIR (69 aa)).

It belongs to the universal ribosomal protein uS3 family. Part of the 30S ribosomal subunit. Forms a tight complex with proteins S10 and S14.

Functionally, binds the lower part of the 30S subunit head. Binds mRNA in the 70S ribosome, positioning it for translation. The polypeptide is Small ribosomal subunit protein uS3 (Desulfovibrio desulfuricans (strain ATCC 27774 / DSM 6949 / MB)).